The primary structure comprises 63 residues: Large ribosomal subunit protein bL28 (63 aa).

The interval 1–20 is disordered; it reads MSRRCAITGKGPMVGNNVSH.

This sequence belongs to the bacterial ribosomal protein bL28 family.

The sequence is that of Large ribosomal subunit protein bL28 from Campylobacter curvus (strain 525.92).